A 128-amino-acid chain; its full sequence is Large-conductance mechanosensitive channel (128 aa).

2 consecutive transmembrane segments (helical) span residues 10–30 and 76–96; these read FAMR…GAFG and GLFI…FMMV.

Belongs to the MscL family. In terms of assembly, homopentamer.

The protein localises to the cell inner membrane. Its function is as follows. Channel that opens in response to stretch forces in the membrane lipid bilayer. May participate in the regulation of osmotic pressure changes within the cell. This is Large-conductance mechanosensitive channel from Mannheimia succiniciproducens (strain KCTC 0769BP / MBEL55E).